Here is a 380-residue protein sequence, read N- to C-terminus: Flap endonuclease 1 (380 aa).

Positions 1–104 (MGIQGLAKLI…GELAKRSERR (104 aa)) are N-domain. Arginine 19 carries the symmetric dimethylarginine; by PRMT5 modification. A Mg(2+)-binding site is contributed by aspartate 34. Positions 47 and 70 each coordinate DNA. Position 80 is an N6-acetyllysine (lysine 80). Aspartate 86 serves as a coordination point for Mg(2+). A symmetric dimethylarginine; by PRMT5 mark is found at arginine 100 and arginine 104. The tract at residues 122 to 253 (EVEKFTKRLV…KRAVDLIQKH (132 aa)) is I-domain. The Mg(2+) site is built by glutamate 158, glutamate 160, aspartate 179, and aspartate 181. Glutamate 158 serves as a coordination point for DNA. Serine 187 carries the post-translational modification Phosphoserine; by CDK2. Arginine 192 carries the post-translational modification Symmetric dimethylarginine; by PRMT5. Serine 197 bears the Phosphoserine mark. Residues glycine 231 and aspartate 233 each contribute to the DNA site. Aspartate 233 is a Mg(2+) binding site. A phosphoserine mark is found at serine 255, serine 293, and serine 335. Residues 327 to 380 (RLSKSRQGSTQGRLDDFFKVTGSLSSAKRKEPEPKGAAKKKAKTGAAGKFKRGK) are disordered. At threonine 336 the chain carries Phosphothreonine. The tract at residues 336–344 (TQGRLDDFF) is interaction with PCNA. Residues lysine 354, lysine 375, lysine 377, and lysine 380 each carry the N6-acetyllysine modification. Basic residues predominate over residues 363-380 (AAKKKAKTGAAGKFKRGK).

It belongs to the XPG/RAD2 endonuclease family. FEN1 subfamily. Interacts with PCNA. Three molecules of FEN1 bind to one PCNA trimer with each molecule binding to one PCNA monomer. PCNA stimulates the nuclease activity without altering cleavage specificity. The C-terminal domain binds EP300; can bind simultaneously to both PCNA and EP300. Interacts with DDX11; this interaction is direct and increases flap endonuclease activity of FEN1. Interacts with WDR4; regulating its endonuclease activity. Interacts with POLB. Requires Mg(2+) as cofactor. Acetylated by EP300. Acetylation inhibits both endonuclease and exonuclease activity. Acetylation also reduces DNA-binding activity but does not affect interaction with PCNA or EP300. Post-translationally, phosphorylation upon DNA damage induces relocalization to the nuclear plasma. Phosphorylation at Ser-187 by CDK2 occurs during late S-phase and results in dissociation from PCNA. In terms of processing, methylation at Arg-192 by PRMT5 impedes Ser-187 phosphorylation and increases interaction with PCNA.

Its subcellular location is the nucleus. It is found in the nucleolus. It localises to the nucleoplasm. The protein localises to the mitochondrion. In terms of biological role, structure-specific nuclease with 5'-flap endonuclease and 5'-3' exonuclease activities involved in DNA replication and repair. During DNA replication, cleaves the 5'-overhanging flap structure that is generated by displacement synthesis when DNA polymerase encounters the 5'-end of a downstream Okazaki fragment. It enters the flap from the 5'-end and then tracks to cleave the flap base, leaving a nick for ligation. Also involved in the long patch base excision repair (LP-BER) pathway, by cleaving within the apurinic/apyrimidinic (AP) site-terminated flap. Acts as a genome stabilization factor that prevents flaps from equilibrating into structures that lead to duplications and deletions. Also possesses 5'-3' exonuclease activity on nicked or gapped double-stranded DNA, and exhibits RNase H activity. Also involved in replication and repair of rDNA and in repairing mitochondrial DNA. The sequence is that of Flap endonuclease 1 from Bos taurus (Bovine).